Reading from the N-terminus, the 236-residue chain is Orotidine 5'-phosphate decarboxylase (236 aa).

Substrate contacts are provided by residues Asp-17, Lys-39, 66 to 75 (DLKFYDIPNT), Thr-125, Arg-187, Gln-196, Gly-216, and Arg-217. The Proton donor role is filled by Lys-68.

It belongs to the OMP decarboxylase family. Type 1 subfamily. As to quaternary structure, homodimer.

It carries out the reaction orotidine 5'-phosphate + H(+) = UMP + CO2. It participates in pyrimidine metabolism; UMP biosynthesis via de novo pathway; UMP from orotate: step 2/2. Its function is as follows. Catalyzes the decarboxylation of orotidine 5'-monophosphate (OMP) to uridine 5'-monophosphate (UMP). The protein is Orotidine 5'-phosphate decarboxylase of Buchnera aphidicola subsp. Baizongia pistaciae (strain Bp).